We begin with the raw amino-acid sequence, 274 residues long: Penicillin-insensitive murein endopeptidase (274 aa).

The first 19 residues, 1 to 19, serve as a signal peptide directing secretion; sequence MNKTAIALLALLASSASLA. 3 disulfides stabilise this stretch: Cys-44–Cys-265, Cys-187–Cys-235, and Cys-216–Cys-223. The Zn(2+) site is built by His-110, His-113, Asp-120, Asp-147, His-150, and His-211. Residues 227 to 274 form a disordered region; the sequence is PLPPPGDGCGAELQSWFEPPKPGTTKPEKKTPPPLPPSCQALLDEHVI.

This sequence belongs to the peptidase M74 family. Dimer. The cofactor is Zn(2+).

It localises to the periplasm. Functionally, murein endopeptidase that cleaves the D-alanyl-meso-2,6-diamino-pimelyl amide bond that connects peptidoglycan strands. Likely plays a role in the removal of murein from the sacculus. This is Penicillin-insensitive murein endopeptidase from Escherichia coli O9:H4 (strain HS).